The sequence spans 314 residues: Homoserine O-acetyltransferase (314 aa).

Cysteine 142 serves as the catalytic Acyl-thioester intermediate. Substrate contacts are provided by lysine 163 and serine 192. The active-site Proton acceptor is histidine 235. Residue glutamate 237 is part of the active site. Substrate is bound at residue arginine 249.

Belongs to the MetA family.

Its subcellular location is the cytoplasm. The enzyme catalyses L-homoserine + acetyl-CoA = O-acetyl-L-homoserine + CoA. It participates in amino-acid biosynthesis; L-methionine biosynthesis via de novo pathway; O-acetyl-L-homoserine from L-homoserine: step 1/1. Its function is as follows. Transfers an acetyl group from acetyl-CoA to L-homoserine, forming acetyl-L-homoserine. In Streptococcus pneumoniae serotype 19F (strain G54), this protein is Homoserine O-acetyltransferase.